The primary structure comprises 94 residues: C-X-C motif chemokine 11 (94 aa).

The N-terminal stretch at Met1–Gly21 is a signal peptide. Residue Arg27 is modified to Citrulline; by PAD2. Intrachain disulfides connect Cys30/Cys57 and Cys32/Cys74.

As to quaternary structure, interacts with TNFAIP6 (via Link domain). High levels in peripheral blood leukocytes, pancreas and liver astrocytes. Moderate levels in thymus, spleen and lung. Low levels in placenta, prostate and small intestine. Also found in epidermal basal layer keratinocytes in skin disorders.

The protein resides in the secreted. In terms of biological role, chemotactic for interleukin-activated T-cells but not unstimulated T-cells, neutrophils or monocytes. Induces calcium release in activated T-cells. Binds to CXCR3. May play an important role in CNS diseases which involve T-cell recruitment. May play a role in skin immune responses. The protein is C-X-C motif chemokine 11 (CXCL11) of Homo sapiens (Human).